The sequence spans 515 residues: 2-isopropylmalate synthase (515 aa).

The Pyruvate carboxyltransferase domain maps to Val5–His267. Mn(2+)-binding residues include Asp14, His202, His204, and Asn238. Residues Lys392 to Val515 form a regulatory domain region.

The protein belongs to the alpha-IPM synthase/homocitrate synthase family. LeuA type 1 subfamily. In terms of assembly, homodimer. Mn(2+) serves as cofactor.

It is found in the cytoplasm. It carries out the reaction 3-methyl-2-oxobutanoate + acetyl-CoA + H2O = (2S)-2-isopropylmalate + CoA + H(+). Its pathway is amino-acid biosynthesis; L-leucine biosynthesis; L-leucine from 3-methyl-2-oxobutanoate: step 1/4. Functionally, catalyzes the condensation of the acetyl group of acetyl-CoA with 3-methyl-2-oxobutanoate (2-ketoisovalerate) to form 3-carboxy-3-hydroxy-4-methylpentanoate (2-isopropylmalate). The protein is 2-isopropylmalate synthase of Aliivibrio salmonicida (strain LFI1238) (Vibrio salmonicida (strain LFI1238)).